The chain runs to 534 residues: Glucomannan 4-beta-mannosyltransferase 2 (534 aa).

The helical transmembrane segment at 36-56 (VIVPLLQLAVYICLLMSVMLL) threads the bilayer. The active site involves aspartate 136. Residues aspartate 195 and aspartate 197 each contribute to the substrate site. The active site involves aspartate 289. 4 helical membrane-spanning segments follow: residues 368–388 (IIAH…TILV), 404–426 (IITI…WILF), 483–503 (LNTL…YDFV), and 509–529 (YFIY…GWIG).

The protein belongs to the glycosyltransferase 2 family. Plant cellulose synthase-like A subfamily.

The protein localises to the golgi apparatus membrane. The catalysed reaction is GDP-mannose + (glucomannan)n = GDP + (glucomannan)n+1.. Functionally, possesses glucomannan synthase and mannan synthase activities in vitro. Mannan synthase consists of a 4-beta-mannosyltransferase activity on mannan using GDP-mannose. The beta-1,4-mannan product is the backbone for galactomannan synthesis by galactomannan galactosyltransferase. Galactomannan is a noncellulosic polysaccharides of plant cell wall. This is Glucomannan 4-beta-mannosyltransferase 2 from Arabidopsis thaliana (Mouse-ear cress).